The following is a 369-amino-acid chain: uncharacterized protein (369 aa).

Residues 110–121 (ARPTDAFGAPIA) are compositionally biased toward low complexity. Residues 110-172 (ARPTDAFGAP…PPPPASGGGA (63 aa)) are disordered. The segment covering 122 to 136 (PSEPTPASAPSPPKA) has biased composition (pro residues).

This is an uncharacterized protein from Lymantria dispar multicapsid nuclear polyhedrosis virus (LdMNPV).